Consider the following 123-residue polypeptide: Small ribosomal subunit protein uS12 (123 aa).

The disordered stretch occupies residues 1–31 (MPTINQLIRKPREAQKARDKAPALQASPQKR). Residues 10–21 (KPREAQKARDKA) are compositionally biased toward basic and acidic residues. A 3-methylthioaspartic acid modification is found at aspartate 89.

It belongs to the universal ribosomal protein uS12 family. As to quaternary structure, part of the 30S ribosomal subunit. Contacts proteins S8 and S17. May interact with IF1 in the 30S initiation complex.

In terms of biological role, with S4 and S5 plays an important role in translational accuracy. Interacts with and stabilizes bases of the 16S rRNA that are involved in tRNA selection in the A site and with the mRNA backbone. Located at the interface of the 30S and 50S subunits, it traverses the body of the 30S subunit contacting proteins on the other side and probably holding the rRNA structure together. The combined cluster of proteins S8, S12 and S17 appears to hold together the shoulder and platform of the 30S subunit. The protein is Small ribosomal subunit protein uS12 of Xanthobacter autotrophicus (strain ATCC BAA-1158 / Py2).